The following is a 4981-amino-acid chain: Protocadherin Fat 4 (4981 aa).

The first 38 residues, 1 to 38, serve as a signal peptide directing secretion; it reads MDLAPDRATGRPWLPLHTLSVSQLLRVFWLLSLLPGQA. Topologically, residues 39 to 4504 are extracellular; it reads WVHGAEPRQV…PEEISLPLWA (4466 aa). Cadherin domains follow at residues 43-135, 136-250, 251-353, 359-475, 476-582, 584-689, 690-793, 794-893, 894-996, 997-1100, 1101-1210, 1211-1315, 1316-1420, 1421-1529, 1529-1629, 1630-1740, 1741-1841, 1842-1944, 1945-2051, 2051-2154, 2155-2259, 2260-2364, 2365-2466, 2467-2567, 2568-2669, 2670-2773, 2773-2872, 2873-2983, 2984-3089, 3090-3194, 3195-3298, 3299-3404, 3405-3510, and 3509-3620; these read AEPR…APVF, PDPS…PPVF, GSSH…DPVV, PATS…PPVF, SQQV…KPVF, QPEG…SPVF, YPVQ…PPVF, SQVA…SPHF, LQAI…SPVF, DQLS…RPLF, NSTN…APKF, LKDF…TPSF, PKST…PPSF, PPGD…VPMF, FISQ…GPVF, TQPK…PPVF, PTDM…TPKF, SRPV…PPIF, SLNS…PPTF, FLSP…NPIF, AQAL…VPVF, ELSP…VPTF, ASKA…PPRF, QHHP…FPKV, RAKE…APIF, KEDP…APRF, FSQI…APRF, SRTS…APQF, LKSK…TPEF, SQSH…SPVF, LSDD…VPRF, VSKL…PPIF, TLNI…GPML, and MLTV…VEIF. Residues N84 and N237 are each glycosylated (N-linked (GlcNAc...) asparagine). N-linked (GlcNAc...) asparagine glycosylation is found at N393, N416, N435, N483, N551, N615, N676, N721, N825, N880, N946, N1085, N1101, N1104, N1225, N1296, N1389, and N1514. Residues N1828, N1899, N1967, and N2119 are each glycosylated (N-linked (GlcNAc...) asparagine). N2387 and N2430 each carry an N-linked (GlcNAc...) asparagine glycan. 7 N-linked (GlcNAc...) asparagine glycosylation sites follow: N2921, N2937, N3036, N3140, N3217, N3392, and N3477. N3706 and N3758 each carry an N-linked (GlcNAc...) asparagine glycan. The 59-residue stretch at 3802–3860 folds into the EGF-like 1 domain; that stretch reads DHDSCVHGPCQNGGSCLRRLAVSSVLKSRESLPVIIVANEPLQPFLCKCLPGYAGSWCE. 12 disulfides stabilise this stretch: C3806-C3817, C3811-C3848, C3850-C3859, C3866-C3877, C3871-C3886, C3888-C3897, C3904-C3915, C3909-C3924, C3926-C3935, C3942-C3953, C3947-C3962, and C3964-C3973. In terms of domain architecture, EGF-like 2; calcium-binding spans 3862–3898; the sequence is DIDECLPSPCHSGGTCHNLVGGFSCSCPDGFTGRACE. The EGF-like 3; calcium-binding domain maps to 3900-3936; sequence DINECLQSPCKNGAICQNFPGSFNCVCKTGYTGKMCE. The region spanning 3938-3974 is the EGF-like 4 domain; that stretch reads SVNYCECNPCFNGGSCQSGVDSYYCHCPFGVFGKHCE. One can recognise a Laminin G-like 1 domain in the interval 3975–4159; the sequence is LNSYGFEELS…LAAQGILDQC (185 aa). N4017 is a glycosylation site (N-linked (GlcNAc...) asparagine). Intrachain disulfides connect C4133–C4159, C4166–C4177, C4171–C4186, and C4188–C4197. In terms of domain architecture, EGF-like 5 spans 4162–4198; sequence LEGACTRSPCQHGGTCMDYWSWQQCHCKEGLTGKYCE. Residues 4217-4398 enclose the Laminin G-like 2 domain; that stretch reads YHMSQNEKRE…KTDPSVKIGC (182 aa). Residues N4267 and N4312 are each glycosylated (N-linked (GlcNAc...) asparagine). Cystine bridges form between C4365–C4398, C4430–C4441, C4435–C4451, and C4453–C4462. An EGF-like 6 domain is found at 4426–4463; the sequence is PPGDCASHPCQNGGSCEPGLHSGFTCSCPDSHTGRTCE. Residues 4505–4525 form a helical membrane-spanning segment; sequence VPAIVGSCATVLALLVLSLIL. At 4526 to 4981 the chain is on the cytoplasmic side; the sequence is CNQCRGKKAK…PKDGEAEQYV (456 aa). 5 disordered regions span residues 4534–4584, 4680–4713, 4752–4856, 4869–4911, and 4957–4981; these read AKNP…PDII, QGLR…STFY, RSKS…MEYD, KLSQ…AAPG, and AAAN…EQYV. Residues 4680 to 4699 show a composition bias toward polar residues; that stretch reads QGLRTSSLSHSACPTPNPLS. A necessary and sufficient for interaction with MPDZ region spans residues 4706–4795; that stretch reads FSKSSTFYRN…GLSIEEVERL (90 aa). Residues 4809–4821 show a composition bias toward basic and acidic residues; that stretch reads DHGRSSSEEDCRR. S4876 is modified (phosphoserine). A compositionally biased stretch (basic and acidic residues) spans 4971 to 4981; that stretch reads VPKDGEAEQYV.

In terms of assembly, heterophilic interaction with DCHS1; this interaction affects their respective protein levels. Interacts (via cytoplasmic domain) with MPDZ. Forms a complex with PALS1 and MPDZ. In terms of tissue distribution, widely expressed. Expressed in fetal brain, infant brain, brain tumor and colorectal cancer.

It is found in the membrane. Cadherins are calcium-dependent cell adhesion proteins. FAT4 plays a role in the maintenance of planar cell polarity as well as in inhibition of YAP1-mediated neuroprogenitor cell proliferation and differentiation. This Homo sapiens (Human) protein is Protocadherin Fat 4 (FAT4).